The following is a 100-amino-acid chain: Urease subunit gamma (100 aa).

Belongs to the urease gamma subunit family. Heterotrimer of UreA (gamma), UreB (beta) and UreC (alpha) subunits. Three heterotrimers associate to form the active enzyme.

It is found in the cytoplasm. It carries out the reaction urea + 2 H2O + H(+) = hydrogencarbonate + 2 NH4(+). The protein operates within nitrogen metabolism; urea degradation; CO(2) and NH(3) from urea (urease route): step 1/1. This is Urease subunit gamma from Mycobacterium bovis (strain ATCC BAA-935 / AF2122/97).